A 326-amino-acid chain; its full sequence is Metal-binding protein YtgA (326 aa).

A signal peptide spans 1 to 21 (MFFLHVRKYKHVIGGLLCLAG). H75, H141, H207, and D299 together coordinate Fe(2+).

The protein belongs to the bacterial solute-binding protein 9 family. Monomer.

The protein resides in the periplasm. In terms of biological role, part of the ATP-binding cassette (ABC) transport system YtgABCD involved in metal import. Binds Fe(2+), Mn(2+) and Ni(2+), with a preference for Fe(2+) and delivers them to the membrane permease for translocation into the cytoplasm. This chain is Metal-binding protein YtgA, found in Chlamydia muridarum (strain MoPn / Nigg).